A 332-amino-acid polypeptide reads, in one-letter code: Eukaryotic translation initiation factor 3 subunit H (332 aa).

Residues 18 to 153 (VQVDGLTVLK…LKAFRLSDEM (136 aa)) enclose the MPN domain. The disordered stretch occupies residues 251 to 285 (QQQKENYLQRRQQENQSRIQRGEDPLPDEDLSKMF).

It belongs to the eIF-3 subunit H family. As to quaternary structure, component of the eukaryotic translation initiation factor 3 (eIF-3) complex.

Its subcellular location is the cytoplasm. Component of the eukaryotic translation initiation factor 3 (eIF-3) complex, which is involved in protein synthesis of a specialized repertoire of mRNAs and, together with other initiation factors, stimulates binding of mRNA and methionyl-tRNAi to the 40S ribosome. The eIF-3 complex specifically targets and initiates translation of a subset of mRNAs involved in cell proliferation. The chain is Eukaryotic translation initiation factor 3 subunit H from Nematostella vectensis (Starlet sea anemone).